A 346-amino-acid chain; its full sequence is Very-long-chain 3-oxoacyl-CoA reductase (346 aa).

A helical transmembrane segment spans residues 26–46 (GASALLAAGSLFVVSRALVFV). Residues V71, D126, D134, N153, Y220, K224, I253, and S255 each contribute to the NADP(+) site. Residue Y220 is the Proton donor of the active site. The Lowers pKa of active site Tyr role is filled by K224.

This sequence belongs to the short-chain dehydrogenases/reductases (SDR) family.

Its subcellular location is the endoplasmic reticulum membrane. The enzyme catalyses a very-long-chain (3R)-3-hydroxyacyl-CoA + NADP(+) = a very-long-chain 3-oxoacyl-CoA + NADPH + H(+). Its pathway is lipid metabolism; fatty acid biosynthesis. In terms of biological role, component of the microsomal membrane bound fatty acid elongation system, which produces the 26-carbon very long-chain fatty acids (VLCFA) from palmitate. Catalyzes the reduction of the 3-ketoacyl-CoA intermediate that is formed in each cycle of fatty acid elongation. VLCFAs serve as precursors for ceramide and sphingolipids. The chain is Very-long-chain 3-oxoacyl-CoA reductase from Aspergillus niger (strain ATCC MYA-4892 / CBS 513.88 / FGSC A1513).